A 293-amino-acid polypeptide reads, in one-letter code: tRNA pseudouridine synthase B (293 aa).

Catalysis depends on Asp39, which acts as the Nucleophile.

This sequence belongs to the pseudouridine synthase TruB family. Type 1 subfamily.

It carries out the reaction uridine(55) in tRNA = pseudouridine(55) in tRNA. Functionally, responsible for synthesis of pseudouridine from uracil-55 in the psi GC loop of transfer RNAs. This Streptococcus thermophilus (strain CNRZ 1066) protein is tRNA pseudouridine synthase B.